A 489-amino-acid chain; its full sequence is MFS-type transporter MFS19 (489 aa).

Positions 1–12 (MAHSTAGDRDPE) are enriched in basic and acidic residues. The disordered stretch occupies residues 1 to 42 (MAHSTAGDRDPEVGSEQHSSIAQLHTESMSDPWGDSNSPENP). A compositionally biased stretch (polar residues) spans 16–41 (EQHSSIAQLHTESMSDPWGDSNSPEN). A helical transmembrane segment spans residues 52–72 (FHVAIVSIFTLTANLAATMFA). N-linked (GlcNAc...) asparagine glycans are attached at residues Asn83 and Asn86. 11 consecutive transmembrane segments (helical) span residues 91-111 (AMTVSLYVLGFAFGPLLLAPL), 127-147 (VYIAFTVGCAFSTNVSMFLVF), 149-169 (FLCGCAASGPMSIGGGTVADI), 180-200 (ALFAMGPLLGPVLGPIIGGYV), 208-228 (WTFRIILIMSGIIGLATMFFM), 282-302 (PIVLLISLYTGVLFGLIFLLF), 321-341 (GLAYLGLGIGMFLGLVVFSIL), 361-381 (LILMKWFGPITPLGCFMYGWS), 388-408 (WIVPILGTSIIGFGSLFVVIP), 425-445 (ALAANLLVRSPFGAFLGLVAA), and 454-474 (GWGNSVLGFITLAFTPVPWLF).

Belongs to the major facilitator superfamily.

It is found in the cell membrane. Functionally, MFS-type efflux pump involved in the modulation susceptibility to various compounds including cumyl hydroperoxide, potassium superoxide, many singlet oxygen-generating compounds (eosin Y, rose Bengal, hematoporphyrin, methylene blue, and cercosporin), and the cell wall biosynthesis inhibitor Congo red. Involved in oxidative stress tolerance, colonization, and lesion formation. The protein is MFS-type transporter MFS19 of Alternaria alternata (Alternaria rot fungus).